The following is a 383-amino-acid chain: ATP phosphoribosyltransferase regulatory subunit (383 aa).

This sequence belongs to the class-II aminoacyl-tRNA synthetase family. HisZ subfamily. In terms of assembly, heteromultimer composed of HisG and HisZ subunits.

Its subcellular location is the cytoplasm. It functions in the pathway amino-acid biosynthesis; L-histidine biosynthesis; L-histidine from 5-phospho-alpha-D-ribose 1-diphosphate: step 1/9. In terms of biological role, required for the first step of histidine biosynthesis. May allow the feedback regulation of ATP phosphoribosyltransferase activity by histidine. This chain is ATP phosphoribosyltransferase regulatory subunit, found in Janthinobacterium sp. (strain Marseille) (Minibacterium massiliensis).